Consider the following 456-residue polypeptide: Bifunctional protein GlmU (456 aa).

The pyrophosphorylase stretch occupies residues 1–229; that stretch reads MLNNAMSVVI…LSEVEGVNNR (229 aa). UDP-N-acetyl-alpha-D-glucosamine is bound by residues 11 to 14, K25, Q76, 81 to 82, 103 to 105, G140, E154, N169, and N227; these read LAAG, GT, and YGD. Residue D105 participates in Mg(2+) binding. N227 provides a ligand contact to Mg(2+). The linker stretch occupies residues 230–250; the sequence is LQLSRLERVYQSEQAEKLLLA. An N-acetyltransferase region spans residues 251–456; it reads GVMLRDPARF…EGWRRPVKKK (206 aa). UDP-N-acetyl-alpha-D-glucosamine is bound by residues R333 and K351. The Proton acceptor role is filled by H363. 2 residues coordinate UDP-N-acetyl-alpha-D-glucosamine: Y366 and N377. Residues A380, 386–387, S405, A423, and R440 each bind acetyl-CoA; that span reads NY.

It in the N-terminal section; belongs to the N-acetylglucosamine-1-phosphate uridyltransferase family. This sequence in the C-terminal section; belongs to the transferase hexapeptide repeat family. In terms of assembly, homotrimer. Mg(2+) is required as a cofactor.

It localises to the cytoplasm. The enzyme catalyses alpha-D-glucosamine 1-phosphate + acetyl-CoA = N-acetyl-alpha-D-glucosamine 1-phosphate + CoA + H(+). It catalyses the reaction N-acetyl-alpha-D-glucosamine 1-phosphate + UTP + H(+) = UDP-N-acetyl-alpha-D-glucosamine + diphosphate. It participates in nucleotide-sugar biosynthesis; UDP-N-acetyl-alpha-D-glucosamine biosynthesis; N-acetyl-alpha-D-glucosamine 1-phosphate from alpha-D-glucosamine 6-phosphate (route II): step 2/2. Its pathway is nucleotide-sugar biosynthesis; UDP-N-acetyl-alpha-D-glucosamine biosynthesis; UDP-N-acetyl-alpha-D-glucosamine from N-acetyl-alpha-D-glucosamine 1-phosphate: step 1/1. The protein operates within bacterial outer membrane biogenesis; LPS lipid A biosynthesis. In terms of biological role, catalyzes the last two sequential reactions in the de novo biosynthetic pathway for UDP-N-acetylglucosamine (UDP-GlcNAc). The C-terminal domain catalyzes the transfer of acetyl group from acetyl coenzyme A to glucosamine-1-phosphate (GlcN-1-P) to produce N-acetylglucosamine-1-phosphate (GlcNAc-1-P), which is converted into UDP-GlcNAc by the transfer of uridine 5-monophosphate (from uridine 5-triphosphate), a reaction catalyzed by the N-terminal domain. The sequence is that of Bifunctional protein GlmU from Escherichia coli (strain 55989 / EAEC).